A 94-amino-acid chain; its full sequence is Putative toxin RelE4 (94 aa).

The protein belongs to the RelE toxin family.

Toxic component of a type II toxin-antitoxin (TA) system. Its cognate antitoxin is RelB4 (Potential). This Methanocaldococcus jannaschii (strain ATCC 43067 / DSM 2661 / JAL-1 / JCM 10045 / NBRC 100440) (Methanococcus jannaschii) protein is Putative toxin RelE4 (relE4).